The following is a 202-amino-acid chain: FMN-dependent NADH:quinone oxidoreductase (202 aa).

FMN-binding positions include serine 10 and 95 to 98; that span reads MYNF.

Belongs to the azoreductase type 1 family. In terms of assembly, homodimer. The cofactor is FMN.

It catalyses the reaction 2 a quinone + NADH + H(+) = 2 a 1,4-benzosemiquinone + NAD(+). The enzyme catalyses N,N-dimethyl-1,4-phenylenediamine + anthranilate + 2 NAD(+) = 2-(4-dimethylaminophenyl)diazenylbenzoate + 2 NADH + 2 H(+). Quinone reductase that provides resistance to thiol-specific stress caused by electrophilic quinones. In terms of biological role, also exhibits azoreductase activity. Catalyzes the reductive cleavage of the azo bond in aromatic azo compounds to the corresponding amines. The chain is FMN-dependent NADH:quinone oxidoreductase from Pseudoalteromonas atlantica (strain T6c / ATCC BAA-1087).